The following is a 342-amino-acid chain: Trans-3-hydroxy-L-proline dehydratase (342 aa).

Ser90 (proton acceptor) is an active-site residue. Substrate-binding positions include 91 to 92 (GS), Asp251, and 256 to 257 (GT).

This sequence belongs to the proline racemase family.

It carries out the reaction trans-3-hydroxy-L-proline = 1-pyrroline-2-carboxylate + H2O. Its function is as follows. Catalyzes the dehydration of trans-3-hydroxy-L-proline (t3LHyp) to Delta(1)-pyrroline-2-carboxylate (Pyr2C). Displays neither proline racemase activity nor 4-hydroxyproline 2-epimerase activity. The protein is Trans-3-hydroxy-L-proline dehydratase of Brucella suis biovar 1 (strain 1330).